Consider the following 331-residue polypeptide: Phosphoribosylformylglycinamidine cyclo-ligase (331 aa).

This sequence belongs to the AIR synthase family.

Its subcellular location is the cytoplasm. The enzyme catalyses 2-formamido-N(1)-(5-O-phospho-beta-D-ribosyl)acetamidine + ATP = 5-amino-1-(5-phospho-beta-D-ribosyl)imidazole + ADP + phosphate + H(+). Its pathway is purine metabolism; IMP biosynthesis via de novo pathway; 5-amino-1-(5-phospho-D-ribosyl)imidazole from N(2)-formyl-N(1)-(5-phospho-D-ribosyl)glycinamide: step 2/2. This is Phosphoribosylformylglycinamidine cyclo-ligase from Clostridium botulinum (strain Langeland / NCTC 10281 / Type F).